A 715-amino-acid chain; its full sequence is Transcription factor MST12 (715 aa).

A compositionally biased stretch (low complexity) spans serine 214–phenylalanine 224. Disordered regions lie at residues serine 214 to proline 243, alanine 439 to proline 469, and proline 518 to glycine 539. 2 consecutive C2H2-type zinc fingers follow at residues histidine 564–histidine 588 and tyrosine 594–histidine 616. The tract at residues glutamate 632–tyrosine 691 is disordered. A compositionally biased stretch (polar residues) spans serine 648–serine 679.

It belongs to the STE12 transcription factor family.

It is found in the nucleus. In terms of biological role, transcription factor that may function downstream of PMK1 to regulate genes involved in infectious hyphae growth. Is not essential for vegetative growth, conidiation or appressorium formation. May be involved in the regulation of the expression of the cell surface sensor MSB2. The protein is Transcription factor MST12 of Pyricularia oryzae (strain 70-15 / ATCC MYA-4617 / FGSC 8958) (Rice blast fungus).